Here is a 152-residue protein sequence, read N- to C-terminus: FAD synthase (152 aa).

ATP-binding positions include 16 to 17 (TF), 21 to 24 (HPGH), D101, and Y129.

Belongs to the archaeal FAD synthase family. Homodimer. The cofactor is a divalent metal cation.

The catalysed reaction is FMN + ATP + H(+) = FAD + diphosphate. The protein operates within cofactor biosynthesis; FAD biosynthesis; FAD from FMN: step 1/1. Its function is as follows. Catalyzes the transfer of the AMP portion of ATP to flavin mononucleotide (FMN) to produce flavin adenine dinucleotide (FAD) coenzyme. The chain is FAD synthase from Methanocaldococcus vulcanius (strain ATCC 700851 / DSM 12094 / M7) (Methanococcus vulcanius).